The primary structure comprises 280 residues: Probable holocytochrome-c-type synthase (280 aa).

The disordered stretch occupies residues 1–95 (MGSSQSTPKV…FALPTKREKS (95 aa)). HRM repeat units lie at residues 35–40 (QCPLTP) and 56–61 (ACPVGA).

The protein belongs to the cytochrome c-type heme lyase family.

Its subcellular location is the mitochondrion inner membrane. The catalysed reaction is holo-[cytochrome c] = apo-[cytochrome c] + heme b. Probable lyase that catalyzes the covalent linking of the heme group to the cytochrome C apoprotein to produce the mature functional cytochrome. This Caenorhabditis elegans protein is Probable holocytochrome-c-type synthase (cchl-1).